Here is a 785-residue protein sequence, read N- to C-terminus: Endonuclease MutS2 (785 aa).

335 to 342 (GPNTGGKT) lines the ATP pocket. The Smr domain maps to 710–785 (LDLRGERYED…GNGVTIVEFK (76 aa)).

Belongs to the DNA mismatch repair MutS family. MutS2 subfamily. Homodimer. Binds to stalled ribosomes, contacting rRNA.

Its function is as follows. Endonuclease that is involved in the suppression of homologous recombination and thus may have a key role in the control of bacterial genetic diversity. Acts as a ribosome collision sensor, splitting the ribosome into its 2 subunits. Detects stalled/collided 70S ribosomes which it binds and splits by an ATP-hydrolysis driven conformational change. Acts upstream of the ribosome quality control system (RQC), a ribosome-associated complex that mediates the extraction of incompletely synthesized nascent chains from stalled ribosomes and their subsequent degradation. Probably generates substrates for RQC. This is Endonuclease MutS2 from Listeria monocytogenes serotype 4b (strain CLIP80459).